Here is a 194-residue protein sequence, read N- to C-terminus: MRVMGVDPGLTRCGLSVIESGKGRQVIALDVDVVRTPAGHPLAHRLLAISDAVDHWLDTHRPDVIAIERVFSNQNANTAMGTAQAGGVIALAAARRDIDVHFHTPSEVKAAVTGNGRADKAQVTEMVTRILALQQKPTPADAADALALAICHCWRAPMLGRMAAAEEMAAEQRRKYQATLKAKAKAAQMSRSTR.

Active-site residues include D7, E68, and D141. The Mg(2+) site is built by D7, E68, and D141.

The protein belongs to the RuvC family. In terms of assembly, homodimer which binds Holliday junction (HJ) DNA. The HJ becomes 2-fold symmetrical on binding to RuvC with unstacked arms; it has a different conformation from HJ DNA in complex with RuvA. In the full resolvosome a probable DNA-RuvA(4)-RuvB(12)-RuvC(2) complex forms which resolves the HJ. Mg(2+) serves as cofactor.

It is found in the cytoplasm. It carries out the reaction Endonucleolytic cleavage at a junction such as a reciprocal single-stranded crossover between two homologous DNA duplexes (Holliday junction).. Its function is as follows. The RuvA-RuvB-RuvC complex processes Holliday junction (HJ) DNA during genetic recombination and DNA repair. Endonuclease that resolves HJ intermediates. Cleaves cruciform DNA by making single-stranded nicks across the HJ at symmetrical positions within the homologous arms, yielding a 5'-phosphate and a 3'-hydroxyl group; requires a central core of homology in the junction. The consensus cleavage sequence is 5'-(A/T)TT(C/G)-3'. Cleavage occurs on the 3'-side of the TT dinucleotide at the point of strand exchange. HJ branch migration catalyzed by RuvA-RuvB allows RuvC to scan DNA until it finds its consensus sequence, where it cleaves and resolves the cruciform DNA. This is Crossover junction endodeoxyribonuclease RuvC from Mycolicibacterium vanbaalenii (strain DSM 7251 / JCM 13017 / BCRC 16820 / KCTC 9966 / NRRL B-24157 / PYR-1) (Mycobacterium vanbaalenii).